A 34-amino-acid polypeptide reads, in one-letter code: MSDIN-like toxin proprotein 3 (34 aa).

Residues 1–10 (MSDINTARLP) constitute a propeptide that is removed on maturation. A cross-link (cyclopeptide (Phe-Pro)) is located at residues 11–20 (FFQPPEFRPP). The propeptide occupies 21-34 (CVGDDIEMVLTRGE).

This sequence belongs to the MSDIN fungal toxin family. In terms of processing, processed by the macrocyclase-peptidase enzyme POPB to yield a toxic cyclic decapeptide. POPB first removes 10 residues from the N-terminus. Conformational trapping of the remaining peptide forces the enzyme to release this intermediate rather than proceed to macrocyclization. The enzyme rebinds the remaining peptide in a different conformation and catalyzes macrocyclization of the N-terminal 10 residues.

In terms of biological role, probable toxin that belongs to the MSDIN-like toxin family responsible for a large number of food poisoning cases and deaths. The protein is MSDIN-like toxin proprotein 3 of Amanita bisporigera (Destroying angel).